The sequence spans 108 residues: Protein ORFa in retron Ec67 (108 aa).

The protein is Protein ORFa in retron Ec67 of Escherichia coli.